The following is a 179-amino-acid chain: Lebocin-4 (179 aa).

The N-terminal stretch at 1–16 (MYKFLVFSSVLVLFFA) is a signal peptide. Positions 17-120 (QASCQRFIQP…RPIESHRNTR (104 aa)) are excised as a propeptide. O-linked (GalNAc...) threonine glycosylation occurs at Thr135. The propeptide occupies 153–179 (RRHASDDQEELRHHNEHFLIPRDILQD).

Belongs to the lebocin family. Post-translationally, O-glycosylation is important for the antibacterial activity of lebocin. As to expression, hemolymph. Produced in fat body.

It localises to the secreted. Its function is as follows. Antibacterial peptide. The sequence is that of Lebocin-4 (LEB4) from Bombyx mori (Silk moth).